Consider the following 274-residue polypeptide: Leucyl/phenylalanyl-tRNA--protein transferase (274 aa).

It belongs to the L/F-transferase family.

Its subcellular location is the cytoplasm. The enzyme catalyses N-terminal L-lysyl-[protein] + L-leucyl-tRNA(Leu) = N-terminal L-leucyl-L-lysyl-[protein] + tRNA(Leu) + H(+). The catalysed reaction is N-terminal L-arginyl-[protein] + L-leucyl-tRNA(Leu) = N-terminal L-leucyl-L-arginyl-[protein] + tRNA(Leu) + H(+). It carries out the reaction L-phenylalanyl-tRNA(Phe) + an N-terminal L-alpha-aminoacyl-[protein] = an N-terminal L-phenylalanyl-L-alpha-aminoacyl-[protein] + tRNA(Phe). Functions in the N-end rule pathway of protein degradation where it conjugates Leu, Phe and, less efficiently, Met from aminoacyl-tRNAs to the N-termini of proteins containing an N-terminal arginine or lysine. This Psychrobacter cryohalolentis (strain ATCC BAA-1226 / DSM 17306 / VKM B-2378 / K5) protein is Leucyl/phenylalanyl-tRNA--protein transferase.